The following is a 489-amino-acid chain: Rhamnulokinase (489 aa).

13–17 (ASSGR) provides a ligand contact to ATP. Cysteine 68 and cysteine 222 are oxidised to a cystine. Substrate-binding positions include glycine 83 and 236–238 (HDT). The active-site Proton acceptor is aspartate 237. ATP is bound at residue threonine 259. Asparagine 296 is a substrate binding site. Residue glutamine 304 coordinates ATP. An intrachain disulfide couples cysteine 353 to cysteine 370. Glycine 402 contributes to the ATP binding site. Cysteine 413 and cysteine 417 are disulfide-bonded.

This sequence belongs to the rhamnulokinase family. It depends on Mg(2+) as a cofactor.

It carries out the reaction L-rhamnulose + ATP = L-rhamnulose 1-phosphate + ADP + H(+). Its pathway is carbohydrate degradation; L-rhamnose degradation; glycerone phosphate from L-rhamnose: step 2/3. Its function is as follows. Involved in the catabolism of L-rhamnose (6-deoxy-L-mannose). Catalyzes the transfer of the gamma-phosphate group from ATP to the 1-hydroxyl group of L-rhamnulose to yield L-rhamnulose 1-phosphate. The chain is Rhamnulokinase from Shigella sonnei (strain Ss046).